The primary structure comprises 258 residues: Proteasome subunit alpha (258 aa).

Belongs to the peptidase T1A family. The 20S proteasome core is composed of 14 alpha and 14 beta subunits that assemble into four stacked heptameric rings, resulting in a barrel-shaped structure. The two inner rings, each composed of seven catalytic beta subunits, are sandwiched by two outer rings, each composed of seven alpha subunits. The catalytic chamber with the active sites is on the inside of the barrel. Has a gated structure, the ends of the cylinder being occluded by the N-termini of the alpha-subunits. Is capped at one or both ends by the proteasome regulatory ATPase, PAN.

Its subcellular location is the cytoplasm. With respect to regulation, the formation of the proteasomal ATPase PAN-20S proteasome complex, via the docking of the C-termini of PAN into the intersubunit pockets in the alpha-rings, triggers opening of the gate for substrate entry. Interconversion between the open-gate and close-gate conformations leads to a dynamic regulation of the 20S proteasome proteolysis activity. Functionally, component of the proteasome core, a large protease complex with broad specificity involved in protein degradation. This chain is Proteasome subunit alpha, found in Aeropyrum pernix (strain ATCC 700893 / DSM 11879 / JCM 9820 / NBRC 100138 / K1).